A 740-amino-acid polypeptide reads, in one-letter code: NAD(P)H-quinone oxidoreductase subunit 5, chloroplastic (740 aa).

Helical transmembrane passes span 9-29, 40-60, 89-109, 125-145, 147-167, 185-205, 219-239, 258-278, 286-306, 327-347, 354-374, 396-416, 425-445, 543-563, 602-622, and 717-737; these read WIIP…LFLF, WAFQ…YLSI, IDPL…MVLI, FAYM…SNLI, IYIF…FWFT, GDFG…SFEF, NEVD…GAVA, TPIS…FLVA, VIPY…LLGA, LGYM…FHLI, ALLF…VGYS, ITFL…CFWS, WLYS…TAFY, LFPI…GIPF, VLSV…YKPI, and SYLF…YLLF.

It belongs to the complex I subunit 5 family. In terms of assembly, NDH is composed of at least 16 different subunits, 5 of which are encoded in the nucleus.

It is found in the plastid. It localises to the chloroplast thylakoid membrane. The catalysed reaction is a plastoquinone + NADH + (n+1) H(+)(in) = a plastoquinol + NAD(+) + n H(+)(out). The enzyme catalyses a plastoquinone + NADPH + (n+1) H(+)(in) = a plastoquinol + NADP(+) + n H(+)(out). Its function is as follows. NDH shuttles electrons from NAD(P)H:plastoquinone, via FMN and iron-sulfur (Fe-S) centers, to quinones in the photosynthetic chain and possibly in a chloroplast respiratory chain. The immediate electron acceptor for the enzyme in this species is believed to be plastoquinone. Couples the redox reaction to proton translocation, and thus conserves the redox energy in a proton gradient. The chain is NAD(P)H-quinone oxidoreductase subunit 5, chloroplastic (ndhF) from Nicotiana sylvestris (Wood tobacco).